The chain runs to 101 residues: Integration host factor subunit beta (101 aa).

It belongs to the bacterial histone-like protein family. In terms of assembly, heterodimer of an alpha and a beta chain.

Functionally, this protein is one of the two subunits of integration host factor, a specific DNA-binding protein that functions in genetic recombination as well as in transcriptional and translational control. The chain is Integration host factor subunit beta from Janthinobacterium sp. (strain Marseille) (Minibacterium massiliensis).